The primary structure comprises 100 residues: Urease subunit gamma (100 aa).

Belongs to the urease gamma subunit family. In terms of assembly, heterotrimer of UreA (gamma), UreB (beta) and UreC (alpha) subunits. Three heterotrimers associate to form the active enzyme.

It is found in the cytoplasm. The catalysed reaction is urea + 2 H2O + H(+) = hydrogencarbonate + 2 NH4(+). It participates in nitrogen metabolism; urea degradation; CO(2) and NH(3) from urea (urease route): step 1/1. The polypeptide is Urease subunit gamma (Allorhizobium ampelinum (strain ATCC BAA-846 / DSM 112012 / S4) (Agrobacterium vitis (strain S4))).